The sequence spans 2065 residues: Cytoskeleton-associated protein 5-A (2065 aa).

TOG regions lie at residues 1-240 (MGDD…DLKA) and 264-515 (VDAY…KETK). HEAT repeat units lie at residues 120–157 (EKAEVVQEELLKGLDNKNPKIVVACVETVRKALSEFGS), 160–197 (MTLKPIIKVLPKLFESREKAIRDEAKLLAVEIYRWIRD), 270–311 (LEAV…NPKI), 314–352 (GDFADLVKALKTVVGKDTNVMLVALAAKCIAGLAAGLRK), 356–393 (SYAGHIVPTILEKFKEKKPQVVQALQEAIDAVFLTTTL), 395–432 (NISEDVLAVMDNKNPAIKQQTSLFLARSFRHCTPSTLP), and 436–477 (LKPF…VNPF). The interval 500 to 574 (NGKKGGAAAG…GATAKGKKAV (75 aa)) is disordered. The span at 538–568 (KAAAAPKKAPAAKPGGPVKKAKAPASSGATA) shows a compositional bias: low complexity. Positions 644–808 (KPGFKETNFQ…LSQIDAEFEK (165 aa)) are TOG 3. HEAT repeat units follow at residues 652–689 (FQVMQMKLHIVALIAQKGNFSKTSACAVLDGLVDKVGD) and 748–785 (INVKAFISNVKTALAATNPAIRTSAITLLGVMYLYMGA). The interval 809–849 (MKGQTPPVSIRGSKHGSGRDEGEEGEEQDEDAPADVTDLLP) is disordered. A compositionally biased stretch (acidic residues) spans 829–841 (EGEEGEEQDEDAP). The segment at 846–1090 (DLLPRTDISD…AGPPGKASSK (245 aa)) is TOG 4. HEAT repeat units follow at residues 852-889 (DISDKISSDLVSKIEDKNWKIRKEGLDEVTAIINEAKF), 892-929 (PSIGELPSALKGRLNDSNKILVQQTLTILQQLSTAMGH), 933-970 (QHVKNLGMPIITVLGDSKANVRAAALGTLKSWVDQTGM), and 1015-1052 (CVPYLYNCLEDRNGDVRKKAQEALPIFMMHIGFEKMSK). Residues 1074–1115 (ASMPAKPAGPPGKASSKQPPAVAQASASPPPAASSDSGSSTS) show a composition bias toward low complexity. The interval 1074–1192 (ASMPAKPAGP…AKDEEDKSGP (119 aa)) is disordered. Residues 1126–1163 (PGTQASKAKTQSVSSEGNTSLNPSNTSLTPSKANTSLS) show a composition bias toward polar residues. The segment at 1150 to 1235 (NTSLTPSKAN…IEQLKTQMSP (86 aa)) is interaction with microtubule lattice. The interval 1191-1460 (GPIYIIVPNG…ERIKRAGKKQ (270 aa)) is TOG 5. HEAT repeat units follow at residues 1251 to 1288 (QRQIKGLAVMTEHLESEKEGVISCLDLVLKWFTLRFFD), 1295 to 1318 (MKCLEYLKLLFIMLSQEEYHLTEM), 1319 to 1355 (EGTSFLPYLMLKVGEPKDIVRKDVRAILTKMCQVYPA), 1357 to 1390 (KMFNFVMEGTKSKNSKQRAECLEELGCLVESYGM), and 1395 to 1432 (PTPAKALKEIAIHIGDRDTTVRNAALNTIVTVYNVHGE). Disordered regions lie at residues 1982 to 2001 (DNAKQDERPPLTSLLSKSSA) and 2028 to 2065 (VELDSNQTYPSTTTSSSASSTNIDDLKKRLERIKSSRK). Residues 2002–2065 (PAVVSSTDML…RLERIKSSRK (64 aa)) form an interaction with tacc3 region. Residues 2038-2048 (STTTSSSASST) are compositionally biased toward low complexity. The segment covering 2051–2065 (DDLKKRLERIKSSRK) has biased composition (basic and acidic residues).

The protein belongs to the TOG/XMAP215 family. In terms of assembly, interacts with tacc3; two molecules of ckap5 interact with 1 molecule of tacc3 probably mediated by coiled coil domains forming a four-helix bundle. Interacts with tacc3 and clathrin forming the TACC3/ch-TOG/clathrin complex located at spindle inter-microtubules bridges. Interacts with ndc80; indicative for an association with the NDC80 comnplex.

The protein localises to the cytoplasm. It localises to the cytoskeleton. The protein resides in the spindle pole. Its subcellular location is the spindle. It is found in the microtubule organizing center. The protein localises to the centrosome. It localises to the chromosome. The protein resides in the centromere. Its subcellular location is the kinetochore. In terms of biological role, binds to the plus end of microtubules and regulates microtubule dynamics and microtubule organization. Acts as a processive microtubule polymerase. Promotes cytoplasmic microtubule nucleation and elongation. Plays a major role in organizing spindle poles. In spindle formation protects kinetochore microtubules from depolymerization by kif2c and has an essential role in centrosomal microtubule assembly independently of kif2c activity. Contributes to centrosome integrity. Acts as a component of the TACC3/ch-TOG/clathrin complex proposed to contribute to stabilization of kinetochore fibers of the mitotic spindle by acting as inter-microtubule bridge. Enhances the strength of NDC80 complex-mediated kinetochore-tip microtubule attachments. The chain is Cytoskeleton-associated protein 5-A (ckap5-a) from Xenopus laevis (African clawed frog).